The chain runs to 1212 residues: DNA topoisomerase 1 (1212 aa).

One can recognise a Toprim domain in the interval 1–114 (MKLVVVESPA…DVERVTFNAI (114 aa)). E7 and D80 together coordinate Mg(2+). The region spanning 130–556 (DNDLINAYLA…AFWHDFKPKT (427 aa)) is the Topo IA-type catalytic domain. The interaction with DNA stretch occupies residues 164–169 (SAGRVQ). The active-site O-(5'-phospho-DNA)-tyrosine intermediate is Y293. Residues 592 to 619 (CPSCHTGRLALKGGRFGAFIACSNYPEC) form a C4-type zinc finger. Disordered regions lie at residues 687–742 (GKGN…GVST), 758–937 (ALAG…KARA), and 1107–1212 (RAKM…EVAE). Composition is skewed to polar residues over residues 708-742 (ASST…GVST) and 770-782 (VSDN…SSTI). Residues 815-840 (ADNRLLSHRNGDIDSRAIPADHKDSS) are compositionally biased toward basic and acidic residues. 2 stretches are compositionally biased toward polar residues: residues 881–890 (AITSDNSPSD) and 897–906 (STPSSATSSV). Over residues 921–934 (KADEQAKEEEESRK) the composition is skewed to basic and acidic residues. Residues 1109–1140 (KMPKKKKTKKAAAKKPAAKKTTTKKAAPKKAT) show a composition bias toward basic residues. Over residues 1141–1151 (TKTATPKSATT) the composition is skewed to low complexity. Residues 1167-1182 (PAKKAVAKKTTAKKPA) show a composition bias toward basic residues. Residues 1183–1199 (SKSATKKAPSSKTTAAK) are compositionally biased toward low complexity.

The protein belongs to the type IA topoisomerase family. As to quaternary structure, monomer. Mg(2+) serves as cofactor.

The catalysed reaction is ATP-independent breakage of single-stranded DNA, followed by passage and rejoining.. Releases the supercoiling and torsional tension of DNA, which is introduced during the DNA replication and transcription, by transiently cleaving and rejoining one strand of the DNA duplex. Introduces a single-strand break via transesterification at a target site in duplex DNA. The scissile phosphodiester is attacked by the catalytic tyrosine of the enzyme, resulting in the formation of a DNA-(5'-phosphotyrosyl)-enzyme intermediate and the expulsion of a 3'-OH DNA strand. The free DNA strand then undergoes passage around the unbroken strand, thus removing DNA supercoils. Finally, in the religation step, the DNA 3'-OH attacks the covalent intermediate to expel the active-site tyrosine and restore the DNA phosphodiester backbone. This Zymomonas mobilis subsp. mobilis (strain ATCC 31821 / ZM4 / CP4) protein is DNA topoisomerase 1.